The primary structure comprises 156 residues: MSRRNTAKKRFASPDPLYKSRLVSMLTVRILKSGKKTLSQRIIYQALDIVKERTESDPLNILEKAIRNITPLVEVKARRVGGSTYQVPIEVRAYRGTNLALRWITKFSRDRSGKSMSMKLANEIMDAANETGNSIRKREDTHRMAEANKAFAHYRY.

Belongs to the universal ribosomal protein uS7 family. As to quaternary structure, part of the 30S ribosomal subunit.

The protein resides in the plastid. It localises to the chloroplast. In terms of biological role, one of the primary rRNA binding proteins, it binds directly to 16S rRNA where it nucleates assembly of the head domain of the 30S subunit. In Pyropia yezoensis (Susabi-nori), this protein is Small ribosomal subunit protein uS7c (rps7).